We begin with the raw amino-acid sequence, 274 residues long: Shikimate dehydrogenase (NADP(+)) (274 aa).

Residues 20–22 (SKS) and Thr68 each bind shikimate. Lys72 acts as the Proton acceptor in catalysis. NADP(+) is bound at residue Asp84. Residues Asn93 and Asp109 each contribute to the shikimate site. Residues 131–135 (GAGGA) and Leu217 each bind NADP(+). Tyr219 serves as a coordination point for shikimate. Position 240 (Gly240) interacts with NADP(+).

The protein belongs to the shikimate dehydrogenase family. As to quaternary structure, homodimer.

The enzyme catalyses shikimate + NADP(+) = 3-dehydroshikimate + NADPH + H(+). The protein operates within metabolic intermediate biosynthesis; chorismate biosynthesis; chorismate from D-erythrose 4-phosphate and phosphoenolpyruvate: step 4/7. In terms of biological role, involved in the biosynthesis of the chorismate, which leads to the biosynthesis of aromatic amino acids. Catalyzes the reversible NADPH linked reduction of 3-dehydroshikimate (DHSA) to yield shikimate (SA). The chain is Shikimate dehydrogenase (NADP(+)) from Sphingopyxis alaskensis (strain DSM 13593 / LMG 18877 / RB2256) (Sphingomonas alaskensis).